The chain runs to 260 residues: Triosephosphate isomerase (260 aa).

11 to 13 contacts substrate; it reads NWK. Histidine 103 functions as the Electrophile in the catalytic mechanism. The active-site Proton acceptor is the glutamate 175. Residues glycine 181, serine 220, and 241–242 each bind substrate; that span reads GG.

It belongs to the triosephosphate isomerase family. As to quaternary structure, homodimer.

It is found in the cytoplasm. It catalyses the reaction D-glyceraldehyde 3-phosphate = dihydroxyacetone phosphate. It functions in the pathway carbohydrate biosynthesis; gluconeogenesis. It participates in carbohydrate degradation; glycolysis; D-glyceraldehyde 3-phosphate from glycerone phosphate: step 1/1. Involved in the gluconeogenesis. Catalyzes stereospecifically the conversion of dihydroxyacetone phosphate (DHAP) to D-glyceraldehyde-3-phosphate (G3P). This is Triosephosphate isomerase from Shewanella halifaxensis (strain HAW-EB4).